The primary structure comprises 88 residues: Large ribosomal subunit protein bL27 (88 aa).

Residues 1–22 (MAHKKGASSSRNGRDSNAQRLG) are disordered. The segment covering 7 to 19 (ASSSRNGRDSNAQ) has biased composition (polar residues).

Belongs to the bacterial ribosomal protein bL27 family.

The chain is Large ribosomal subunit protein bL27 from Mycolicibacterium gilvum (strain PYR-GCK) (Mycobacterium gilvum (strain PYR-GCK)).